Here is a 366-residue protein sequence, read N- to C-terminus: Probable quinol oxidase subunit 2 (366 aa).

The first 19 residues, 1 to 19 (MSKFKSLLLLFGTLILLSG), serve as a signal peptide directing secretion. Cysteine 20 carries N-palmitoyl cysteine lipidation. Cysteine 20 carries S-diacylglycerol cysteine lipidation. The next 2 helical transmembrane spans lie at 38–58 (FLIL…LGMF) and 80–100 (AIIE…LAIP). Residues 330–366 (EPYNNEFKKDESKNAKEMKKISKDAQDQDNDDHGGGH) are disordered. A compositionally biased stretch (basic and acidic residues) spans 335-366 (EFKKDESKNAKEMKKISKDAQDQDNDDHGGGH).

Belongs to the cytochrome c oxidase subunit 2 family.

Its subcellular location is the cell membrane. It carries out the reaction 2 a quinol + O2 = 2 a quinone + 2 H2O. Its function is as follows. Catalyzes quinol oxidation with the concomitant reduction of oxygen to water. Subunit II transfers the electrons from a quinol to the binuclear center of the catalytic subunit I. The protein is Probable quinol oxidase subunit 2 (qoxA) of Staphylococcus aureus (strain bovine RF122 / ET3-1).